The sequence spans 406 residues: uncharacterized protein (406 aa).

It belongs to the glycosyltransferase group 1 family. Glycosyltransferase 4 subfamily.

This is an uncharacterized protein from Methanocaldococcus jannaschii (strain ATCC 43067 / DSM 2661 / JAL-1 / JCM 10045 / NBRC 100440) (Methanococcus jannaschii).